A 221-amino-acid polypeptide reads, in one-letter code: MDSPESSDRGLNPMTPDHGGHNGKVVHYFGQGVEGGPASPRKLGHGHLHPKANTALLLLRLLTFAFSLASLVIMATNSATTTATAGRHRTVNWVDFDTYRYVLAACAIVCLYSFAEIGLGLWYLLKGRMVMPESMAHWFDFGHDQGFAYLIFSACSGATAVAHNLRERHILIHGMYGCDEANSFCMKAEISIGLAFGAFLFIALSSLLSGYRLVKWLILGP.

Residues 1–21 are disordered; the sequence is MDSPESSDRGLNPMTPDHGGH. At 1 to 54 the chain is on the cytoplasmic side; that stretch reads MDSPESSDRGLNPMTPDHGGHNGKVVHYFGQGVEGGPASPRKLGHGHLHPKANT. The helical transmembrane segment at 55–75 threads the bilayer; that stretch reads ALLLLRLLTFAFSLASLVIMA. Residues 76–101 are Extracellular-facing; sequence TNSATTTATAGRHRTVNWVDFDTYRY. Residues 102-122 traverse the membrane as a helical segment; that stretch reads VLAACAIVCLYSFAEIGLGLW. Topologically, residues 123-144 are cytoplasmic; the sequence is YLLKGRMVMPESMAHWFDFGHD. A helical transmembrane segment spans residues 145 to 165; that stretch reads QGFAYLIFSACSGATAVAHNL. At 166–189 the chain is on the extracellular side; it reads RERHILIHGMYGCDEANSFCMKAE. The helical transmembrane segment at 190-210 threads the bilayer; the sequence is ISIGLAFGAFLFIALSSLLSG. Residues 211-221 lie on the Cytoplasmic side of the membrane; it reads YRLVKWLILGP.

It belongs to the Casparian strip membrane proteins (CASP) family. Homodimer and heterodimers.

The protein resides in the cell membrane. The sequence is that of CASP-like protein 4C1 from Pteridium aquilinum subsp. aquilinum (Bracken fern).